A 429-amino-acid polypeptide reads, in one-letter code: Probable imidazolonepropionase (429 aa).

Tyr161 and His194 together coordinate 4-imidazolone-5-propanoate. Tyr161 is an N-formimidoyl-L-glutamate binding site. His262 serves as a coordination point for Fe(3+). His262 is a binding site for Zn(2+). Glu265 is a binding site for 4-imidazolone-5-propanoate. Asp336 lines the Fe(3+) pocket. Asp336 serves as a coordination point for Zn(2+). N-formimidoyl-L-glutamate is bound at residue Asn338.

The protein belongs to the metallo-dependent hydrolases superfamily. HutI family. Zn(2+) is required as a cofactor. Fe(3+) serves as cofactor.

It carries out the reaction 4-imidazolone-5-propanoate + H2O = N-formimidoyl-L-glutamate. It participates in amino-acid degradation; L-histidine degradation into L-glutamate; N-formimidoyl-L-glutamate from L-histidine: step 3/3. The chain is Probable imidazolonepropionase (amdhd1) from Nematostella vectensis (Starlet sea anemone).